We begin with the raw amino-acid sequence, 620 residues long: Arginine--tRNA ligase (620 aa).

A 'HIGH' region motif is present at residues 147–157; it reads ANPTGPIHIGG.

The protein belongs to the class-I aminoacyl-tRNA synthetase family. As to quaternary structure, monomer.

The protein resides in the cytoplasm. It catalyses the reaction tRNA(Arg) + L-arginine + ATP = L-arginyl-tRNA(Arg) + AMP + diphosphate. This chain is Arginine--tRNA ligase, found in Bifidobacterium longum subsp. infantis (strain ATCC 15697 / DSM 20088 / JCM 1222 / NCTC 11817 / S12).